Consider the following 301-residue polypeptide: MPIIIDKDLPARKVLQKENIFVMTKERAETQDIRALKIAILNLMPTKQDTEAQLLRLIGNTPLQLDVHLLHMESHLSRNVTQEHLTSFYKTFRDIENEKFDGLIITGAPVETLAFEEVDYWEELKHIMEYSKTNVTSTLHICWGAQAGLYYHYGVPKYPLKEKMFGVFEHEVCEQHVKLLQGFDELFFAPHSRHTEVRENDIREVKELTLLANSEEAGVHLVIGPEGRQVFALGHSEYSCETLKQEYERDRDKGLNIDVPKNYFKHNNPDEKPLVRWRSHGNLLFSNWLNYYVYQETPYIL.

Cys-142 acts as the Acyl-thioester intermediate in catalysis. 2 residues coordinate substrate: Lys-163 and Ser-192. His-235 (proton acceptor) is an active-site residue. Residue Glu-237 is part of the active site. Position 249 (Arg-249) interacts with substrate.

The protein belongs to the MetA family.

It is found in the cytoplasm. It carries out the reaction L-homoserine + acetyl-CoA = O-acetyl-L-homoserine + CoA. It participates in amino-acid biosynthesis; L-methionine biosynthesis via de novo pathway; O-acetyl-L-homoserine from L-homoserine: step 1/1. In terms of biological role, transfers an acetyl group from acetyl-CoA to L-homoserine, forming acetyl-L-homoserine. The chain is Homoserine O-acetyltransferase from Bacillus cereus (strain ATCC 14579 / DSM 31 / CCUG 7414 / JCM 2152 / NBRC 15305 / NCIMB 9373 / NCTC 2599 / NRRL B-3711).